The chain runs to 286 residues: Putative L-ribulose-5-phosphate 3-epimerase SgbU (286 aa).

This sequence belongs to the L-ribulose-5-phosphate 3-epimerase family.

It catalyses the reaction L-ribulose 5-phosphate = L-xylulose 5-phosphate. Functionally, catalyzes the isomerization of L-xylulose-5-phosphate to L-ribulose-5-phosphate. This chain is Putative L-ribulose-5-phosphate 3-epimerase SgbU (sgbU), found in Haemophilus influenzae (strain ATCC 51907 / DSM 11121 / KW20 / Rd).